The sequence spans 290 residues: Syntaxin-1A (290 aa).

A disordered region spans residues 1–21; it reads MTKDRLAALQAAQSDDEDMPE. The Cytoplasmic segment spans residues 1–267; sequence MTKDRLAALQ…KYQSKARRKK (267 aa). The region spanning 194–256 is the t-SNARE coiled-coil homology domain; the sequence is LADIEARHAD…QTATQDTKKA (63 aa). A helical; Anchor for type IV membrane protein membrane pass occupies residues 268–289; sequence IWIAICVLIAIIILVVFLAIYL. Position 290 (Thr-290) is a topological domain, vesicular.

It belongs to the syntaxin family. (Microbial infection) Targeted and hydrolyzed by the light chain (LC) of P.bifermentans PMP1. Cleavage probably inhibits neurotransmitter release.

The protein localises to the cytoplasmic vesicle. It is found in the secretory vesicle. Its subcellular location is the synaptic vesicle membrane. Plays a critical role in several secretory processes. The chain is Syntaxin-1A from Anopheles gambiae (African malaria mosquito).